The sequence spans 221 residues: Ubiquitin-conjugating enzyme E2 S (221 aa).

The UBC core domain maps to 11-157 (QVLRLVYKEV…AHLLTEIHAM (147 aa)). Catalysis depends on C95, which acts as the Glycyl thioester intermediate. The tract at residues 158 to 221 (GGTSGAPQEP…TDKKRALRRL (64 aa)) is disordered. The span at 193–206 (GTGTNNSNISNTNI) shows a compositional bias: low complexity. Residues 208-221 (AKKKTDKKRALRRL) show a composition bias toward basic residues.

Belongs to the ubiquitin-conjugating enzyme family.

It carries out the reaction S-ubiquitinyl-[E1 ubiquitin-activating enzyme]-L-cysteine + [E2 ubiquitin-conjugating enzyme]-L-cysteine = [E1 ubiquitin-activating enzyme]-L-cysteine + S-ubiquitinyl-[E2 ubiquitin-conjugating enzyme]-L-cysteine.. It participates in protein modification; protein ubiquitination. Functionally, catalyzes the covalent attachment of ubiquitin to other proteins. Acts as an essential factor of the anaphase promoting complex/cyclosome (APC/C), a cell cycle-regulated ubiquitin ligase that controls progression through mitosis. Acts by specifically elongating 'Lys-11'-linked polyubiquitin chains initiated by the E2 enzyme ube2c/ubch10 on APC/C substrates, enhancing the degradation of APC/C substrates by the proteasome and promoting mitotic exit. The protein is Ubiquitin-conjugating enzyme E2 S (ube2s) of Danio rerio (Zebrafish).